Here is a 151-residue protein sequence, read N- to C-terminus: UPF0735 ACT domain-containing protein SAUSA300_1599 (151 aa).

The ACT domain maps to 74–149; it reads TLILYVTDIV…YVSKVELISM (76 aa).

The protein belongs to the UPF0735 family.

This chain is UPF0735 ACT domain-containing protein SAUSA300_1599, found in Staphylococcus aureus (strain USA300).